Consider the following 91-residue polypeptide: Apolipoprotein C-III (91 aa).

Positions 1–20 are cleaved as a signal peptide; that stretch reads MQPRVLLAVTLLALLVSARA. Residue M63 is modified to Methionine sulfoxide. Residues 68–91 form a lipid-binding region; it reads DSMKGYWTSLIGRLSGFLDSTPSS.

It belongs to the apolipoprotein C3 family.

It localises to the secreted. In terms of biological role, component of triglyceride-rich very low density lipoproteins (VLDL) and high density lipoproteins (HDL) in plasma. Plays a multifaceted role in triglyceride homeostasis. Intracellularly, promotes hepatic very low density lipoprotein 1 (VLDL1) assembly and secretion; extracellularly, attenuates hydrolysis and clearance of triglyceride-rich lipoproteins (TRLs). Impairs the lipolysis of TRLs by inhibiting lipoprotein lipase and the hepatic uptake of TRLs by remnant receptors. Formed of several curved helices connected via semiflexible hinges, so that it can wrap tightly around the curved micelle surface and easily adapt to the different diameters of its natural binding partners. The sequence is that of Apolipoprotein C-III (APOC3) from Cavia porcellus (Guinea pig).